The sequence spans 901 residues: Protein translocase subunit SecA (901 aa).

Residues Gln-87, 105–109 (GEGKT), and Asp-512 contribute to the ATP site. The segment at 859 to 901 (HQDDDSAAAAALAAQTGERKVGRNDPCPCGSGKKYKQCHGRLQ) is disordered. Cys-885, Cys-887, Cys-896, and His-897 together coordinate Zn(2+). Basic residues predominate over residues 891–901 (KKYKQCHGRLQ).

The protein belongs to the SecA family. In terms of assembly, monomer and homodimer. Part of the essential Sec protein translocation apparatus which comprises SecA, SecYEG and auxiliary proteins SecDF-YajC and YidC. Zn(2+) serves as cofactor.

Its subcellular location is the cell inner membrane. The protein resides in the cytoplasm. It catalyses the reaction ATP + H2O + cellular proteinSide 1 = ADP + phosphate + cellular proteinSide 2.. Its function is as follows. Part of the Sec protein translocase complex. Interacts with the SecYEG preprotein conducting channel. Has a central role in coupling the hydrolysis of ATP to the transfer of proteins into and across the cell membrane, serving both as a receptor for the preprotein-SecB complex and as an ATP-driven molecular motor driving the stepwise translocation of polypeptide chains across the membrane. The polypeptide is Protein translocase subunit SecA (Escherichia coli (strain 55989 / EAEC)).